We begin with the raw amino-acid sequence, 514 residues long: Probable lysine--tRNA ligase, cytoplasmic (514 aa).

This sequence belongs to the class-II aminoacyl-tRNA synthetase family. Homodimer.

It localises to the cytoplasm. It carries out the reaction tRNA(Lys) + L-lysine + ATP = L-lysyl-tRNA(Lys) + AMP + diphosphate. This chain is Probable lysine--tRNA ligase, cytoplasmic, found in Vairimorpha ceranae (strain BRL01) (Microsporidian parasite).